The chain runs to 285 residues: Bifunctional protein FolD (285 aa).

Residues 164–166 (GAS), Ile-189, and Ile-230 contribute to the NADP(+) site.

It belongs to the tetrahydrofolate dehydrogenase/cyclohydrolase family. Homodimer.

The enzyme catalyses (6R)-5,10-methylene-5,6,7,8-tetrahydrofolate + NADP(+) = (6R)-5,10-methenyltetrahydrofolate + NADPH. It carries out the reaction (6R)-5,10-methenyltetrahydrofolate + H2O = (6R)-10-formyltetrahydrofolate + H(+). It functions in the pathway one-carbon metabolism; tetrahydrofolate interconversion. Catalyzes the oxidation of 5,10-methylenetetrahydrofolate to 5,10-methenyltetrahydrofolate and then the hydrolysis of 5,10-methenyltetrahydrofolate to 10-formyltetrahydrofolate. The sequence is that of Bifunctional protein FolD from Sulfurimonas denitrificans (strain ATCC 33889 / DSM 1251) (Thiomicrospira denitrificans (strain ATCC 33889 / DSM 1251)).